Consider the following 238-residue polypeptide: Aspartate/glutamate leucyltransferase (238 aa).

Belongs to the R-transferase family. Bpt subfamily.

It is found in the cytoplasm. The enzyme catalyses N-terminal L-glutamyl-[protein] + L-leucyl-tRNA(Leu) = N-terminal L-leucyl-L-glutamyl-[protein] + tRNA(Leu) + H(+). The catalysed reaction is N-terminal L-aspartyl-[protein] + L-leucyl-tRNA(Leu) = N-terminal L-leucyl-L-aspartyl-[protein] + tRNA(Leu) + H(+). Functionally, functions in the N-end rule pathway of protein degradation where it conjugates Leu from its aminoacyl-tRNA to the N-termini of proteins containing an N-terminal aspartate or glutamate. This chain is Aspartate/glutamate leucyltransferase, found in Shewanella oneidensis (strain ATCC 700550 / JCM 31522 / CIP 106686 / LMG 19005 / NCIMB 14063 / MR-1).